Consider the following 640-residue polypeptide: Threonine--tRNA ligase (640 aa).

The region spanning M1 to T60 is the TGS domain. A catalytic region spans residues D241–P538. C334, H385, and H515 together coordinate Zn(2+).

The protein belongs to the class-II aminoacyl-tRNA synthetase family. As to quaternary structure, homodimer. It depends on Zn(2+) as a cofactor.

Its subcellular location is the cytoplasm. The catalysed reaction is tRNA(Thr) + L-threonine + ATP = L-threonyl-tRNA(Thr) + AMP + diphosphate + H(+). In terms of biological role, catalyzes the attachment of threonine to tRNA(Thr) in a two-step reaction: L-threonine is first activated by ATP to form Thr-AMP and then transferred to the acceptor end of tRNA(Thr). Also edits incorrectly charged L-seryl-tRNA(Thr). The chain is Threonine--tRNA ligase from Listeria welshimeri serovar 6b (strain ATCC 35897 / DSM 20650 / CCUG 15529 / CIP 8149 / NCTC 11857 / SLCC 5334 / V8).